The following is a 165-amino-acid chain: Protein C2-DOMAIN ABA-RELATED 8 (165 aa).

Position 1 is an N-acetylmethionine (Met-1). Positions 1–106 constitute a C2 domain; it reads MENLVGLLRI…QGTDIQELTN (106 aa). The Ca(2+) site is built by Arg-21, Asp-22, Asp-27, Asp-73, Lys-74, Asp-75, and Asp-81.

This sequence belongs to the plant CAR protein family. In terms of assembly, binds to PYR/PYL/RCAR abscisic acid intracellular receptors in an ABA-independent manner, both at the plasma membrane and in the nucleus.

It is found in the cell membrane. The protein resides in the nucleus. In terms of biological role, stimulates the GTPase/ATPase activities of Obg-like ATPases. Mediates the transient calcium-dependent interaction of PYR/PYL/RCAR abscisic acid (ABA) receptors with the plasma membrane and thus regulates ABA sensitivity. This Arabidopsis thaliana (Mouse-ear cress) protein is Protein C2-DOMAIN ABA-RELATED 8.